We begin with the raw amino-acid sequence, 102 residues long: NADH-quinone oxidoreductase subunit K (102 aa).

3 consecutive transmembrane segments (helical) span residues 5–25, 31–51, and 66–86; these read IAHYLTVSAILFTLGVFGIFL, IVILMSIELILLSVNLNFVAF, and FVLTVAAAEAAIGLAILVVFF.

This sequence belongs to the complex I subunit 4L family. In terms of assembly, NDH-1 is composed of 14 different subunits. Subunits NuoA, H, J, K, L, M, N constitute the membrane sector of the complex.

The protein localises to the cell inner membrane. It carries out the reaction a quinone + NADH + 5 H(+)(in) = a quinol + NAD(+) + 4 H(+)(out). NDH-1 shuttles electrons from NADH, via FMN and iron-sulfur (Fe-S) centers, to quinones in the respiratory chain. The immediate electron acceptor for the enzyme in this species is believed to be ubiquinone. Couples the redox reaction to proton translocation (for every two electrons transferred, four hydrogen ions are translocated across the cytoplasmic membrane), and thus conserves the redox energy in a proton gradient. This chain is NADH-quinone oxidoreductase subunit K, found in Brucella abortus (strain S19).